A 631-amino-acid chain; its full sequence is Pescadillo homolog (631 aa).

Residues 321–414 (RLRTLFKGLK…QLLPTNDYFL (94 aa)) form the BRCT domain. The span at 428 to 442 (SKRDSYIPPEEKALH) shows a compositional bias: basic and acidic residues. 3 disordered regions span residues 428-471 (SKRD…EADQ), 489-561 (YKKY…VDEH), and 602-631 (ADNK…KLVK). Phosphoserine is present on residues S453 and S457. 2 stretches are compositionally biased toward acidic residues: residues 453-471 (SEEE…EADQ) and 498-525 (VNED…EDVD). Residues 526–538 (EQTKRKQQEKEKM) are compositionally biased toward basic and acidic residues. A compositionally biased stretch (basic residues) spans 544–553 (KVHKVNKRQV). Positions 591–631 (WLLRKKRRNIDADNKEAKKAAKREARKQAAEAAARAAKLVK) form a coiled coil. The segment covering 602-619 (ADNKEAKKAAKREARKQA) has biased composition (basic and acidic residues). The segment covering 620–631 (AEAAARAAKLVK) has biased composition (low complexity).

It belongs to the pescadillo family.

It is found in the nucleus. Its subcellular location is the nucleolus. The protein localises to the nucleoplasm. Its function is as follows. Required for maturation of ribosomal RNAs and formation of the large ribosomal subunit. The polypeptide is Pescadillo homolog (Drosophila pseudoobscura pseudoobscura (Fruit fly)).